The chain runs to 524 residues: M-phase inducer phosphatase 1 (524 aa).

The Phosphodegron signature appears at 74–84 (MGSSESTDSGF). Position 76 is a phosphoserine; by CHEK1 (Ser-76). Residues Ser-79, Ser-82, and Ser-88 each carry the phosphoserine; by NEK11 modification. At Ser-107 the chain carries Phosphoserine. Position 124 is a phosphoserine; by CHEK1 and CHEK2 (Ser-124). Positions 141-143 (KEN) match the KEN box motif. The residue at position 178 (Ser-178) is a Phosphoserine; by CHEK1. Residues 264–317 (LCSSSTRSVLKRPERSQEESPPGSTKRRKSMSGASPKESTNPEKAHETLHQSLS) are disordered. Phosphoserine; by CHEK1 and CHEK2 occurs at positions 279 and 293. The segment covering 303–312 (TNPEKAHETL) has biased composition (basic and acidic residues). The residue at position 321 (Ser-321) is a Phosphoserine. Positions 376–482 (LIKEFVIIDC…FFMKCQSYCE (107 aa)) constitute a Rhodanese domain. Cys-431 is a catalytic residue. Thr-507 carries the post-translational modification Phosphothreonine; by CHEK1. 2 positions are modified to phosphoserine; by PLK3: Ser-513 and Ser-519.

The protein belongs to the MPI phosphatase family. As to quaternary structure, interacts with CCNB1/cyclin B1. Interacts with YWHAE/14-3-3 epsilon when phosphorylated. Interacts with CUL1 specifically when CUL1 is neddylated and active. Interacts with BTRC/BTRCP1 and FBXW11/BTRCP2. Interactions with CUL1, BTRC and FBXW11 are enhanced upon DNA damage. Interacts with CHEK2; mediates CDC25A phosphorylation and degradation in response to infrared-induced DNA damages. Interacts with HSP90AB1; prevents heat shock-mediated CDC25A degradation and contributes to cell cycle progression. In terms of processing, phosphorylated by CHEK1 on Ser-76, Ser-124, Ser-178, Ser-279, Ser-293 and Thr-507 during checkpoint mediated cell cycle arrest. Also phosphorylated by CHEK2 on Ser-124, Ser-279, and Ser-293 during checkpoint mediated cell cycle arrest. Phosphorylation on Ser-178 and Thr-507 creates binding sites for YWHAE/14-3-3 epsilon which inhibits CDC25A. Phosphorylation on Ser-76, Ser-124, Ser-178, Ser-279 and Ser-293 may also promote ubiquitin-dependent proteolysis of CDC25A by the SCF complex. Phosphorylation of CDC25A at Ser-76 by CHEK1 primes it for subsequent phosphorylation at Ser-79, Ser-82 and Ser-88 by NEK11. Phosphorylation by NEK11 is required for BTRC-mediated polyubiquitination and degradation. Phosphorylation by PIM1 leads to an increase in phosphatase activity. Phosphorylated by PLK3 following DNA damage, leading to promote its ubiquitination and degradation. Ubiquitinated by the anaphase promoting complex/cyclosome (APC/C) ubiquitin ligase complex that contains FZR1/CDH1 during G1 phase leading to its degradation by the proteasome. Ubiquitinated by a SCF complex containing BTRC and FBXW11 during S phase leading to its degradation by the proteasome. Deubiquitination by USP17L2/DUB3 leads to its stabilization.

It catalyses the reaction O-phospho-L-tyrosyl-[protein] + H2O = L-tyrosyl-[protein] + phosphate. Its activity is regulated as follows. Stimulated by B-type cyclins. Stimulated by PIM1-mediated phosphorylation. Functionally, tyrosine protein phosphatase which functions as a dosage-dependent inducer of mitotic progression. Directly dephosphorylates CDK1 and stimulates its kinase activity. Also dephosphorylates CDK2 in complex with cyclin-E, in vitro. This chain is M-phase inducer phosphatase 1 (CDC25A), found in Homo sapiens (Human).